A 358-amino-acid polypeptide reads, in one-letter code: MAASRTATRTLRALRTSTRPALTAAPRAAFRQGGRRLYSSEPAKSGGSNIWAWAIGAGALGAGGLWYLNQDGASATPKVFAPKFDDYQAVYNEIASRLEEKDDYDDGSYGPVLVRLAWHASGTYDKETGTGGSNGATMRFAPESDHGANAGLKAARDFLEPVKAKFPWITYSDLWILGGVCAIQEMLGPQIPYRPGRQDRDAAGCTPDGRLPDASQAQDHLRNIFYRMGFNDQEIVALSGAHALGRCHADRSGFDGPWTFSPTVLTNDYYKLLLDEKWQWKKWNGPKQYEDKKTKSLMMLPADMALIQDKKFKQWVEKYAADNELFFKDFSNVIVKLFELGVPFAENSERWVFKTVNA.

A mitochondrion-targeting transit peptide spans 1-38 (MAASRTATRTLRALRTSTRPALTAAPRAAFRQGGRRLY). Catalysis depends on His119, which acts as the Proton acceptor. Residues 192–214 (PYRPGRQDRDAAGCTPDGRLPDA) are disordered. A heme b-binding site is contributed by His242. The active-site Tryptophan radical intermediate is the Trp258.

It belongs to the peroxidase family. Cytochrome c peroxidase subfamily. In terms of assembly, forms a one-to-one complex with cytochrome c. The cofactor is heme b.

The protein localises to the mitochondrion matrix. Its subcellular location is the mitochondrion intermembrane space. It carries out the reaction 2 Fe(II)-[cytochrome c] + H2O2 + 2 H(+) = 2 Fe(III)-[cytochrome c] + 2 H2O. Its function is as follows. Destroys radicals which are normally produced within the cells and which are toxic to biological systems. The protein is Cytochrome c peroxidase, mitochondrial (ccp-1) of Neurospora crassa (strain ATCC 24698 / 74-OR23-1A / CBS 708.71 / DSM 1257 / FGSC 987).